The chain runs to 441 residues: uncharacterized protein (441 aa).

78 to 85 (GPRQAGKT) provides a ligand contact to ATP.

This is an uncharacterized protein from Mycobacterium bovis (strain ATCC BAA-935 / AF2122/97).